Reading from the N-terminus, the 137-residue chain is Probable Hsp20 family chaperone (137 aa).

The region spanning 25–137 (LTNNNNIMKT…PKEKHYIKLN (113 aa)) is the sHSP domain.

It belongs to the small heat shock protein (HSP20) family.

Its function is as follows. Probable chaperone. The polypeptide is Probable Hsp20 family chaperone (Onion yellows phytoplasma (strain OY-M)).